The chain runs to 891 residues: Alanine--tRNA ligase (891 aa).

Positions 576, 580, 684, and 688 each coordinate Zn(2+).

It belongs to the class-II aminoacyl-tRNA synthetase family. The cofactor is Zn(2+).

The protein localises to the cytoplasm. It catalyses the reaction tRNA(Ala) + L-alanine + ATP = L-alanyl-tRNA(Ala) + AMP + diphosphate. Its function is as follows. Catalyzes the attachment of alanine to tRNA(Ala) in a two-step reaction: alanine is first activated by ATP to form Ala-AMP and then transferred to the acceptor end of tRNA(Ala). Also edits incorrectly charged Ser-tRNA(Ala) and Gly-tRNA(Ala) via its editing domain. The sequence is that of Alanine--tRNA ligase from Orientia tsutsugamushi (strain Boryong) (Rickettsia tsutsugamushi).